Here is a 374-residue protein sequence, read N- to C-terminus: UDP-N-acetylglucosamine--N-acetylmuramyl-(pentapeptide) pyrophosphoryl-undecaprenol N-acetylglucosamine transferase (374 aa).

Residues 13 to 15 (TGG), asparagine 124, arginine 165, serine 193, and glutamine 294 each bind UDP-N-acetyl-alpha-D-glucosamine.

This sequence belongs to the glycosyltransferase 28 family. MurG subfamily.

It is found in the cell inner membrane. The enzyme catalyses di-trans,octa-cis-undecaprenyl diphospho-N-acetyl-alpha-D-muramoyl-L-alanyl-D-glutamyl-meso-2,6-diaminopimeloyl-D-alanyl-D-alanine + UDP-N-acetyl-alpha-D-glucosamine = di-trans,octa-cis-undecaprenyl diphospho-[N-acetyl-alpha-D-glucosaminyl-(1-&gt;4)]-N-acetyl-alpha-D-muramoyl-L-alanyl-D-glutamyl-meso-2,6-diaminopimeloyl-D-alanyl-D-alanine + UDP + H(+). Its pathway is cell wall biogenesis; peptidoglycan biosynthesis. In terms of biological role, cell wall formation. Catalyzes the transfer of a GlcNAc subunit on undecaprenyl-pyrophosphoryl-MurNAc-pentapeptide (lipid intermediate I) to form undecaprenyl-pyrophosphoryl-MurNAc-(pentapeptide)GlcNAc (lipid intermediate II). This Rhizobium johnstonii (strain DSM 114642 / LMG 32736 / 3841) (Rhizobium leguminosarum bv. viciae) protein is UDP-N-acetylglucosamine--N-acetylmuramyl-(pentapeptide) pyrophosphoryl-undecaprenol N-acetylglucosamine transferase.